A 453-amino-acid chain; its full sequence is GTPase Der (453 aa).

EngA-type G domains are found at residues 4-169 and 177-352; these read PIVA…PPTT and IKIA…EEHK. GTP-binding positions include 10–17, 57–61, 120–123, 183–190, 230–234, and 295–298; these read GRPNVGKS, DTGGL, NKCE, DTAGI, and NKWD. The KH-like domain maps to 353–438; sequence RRVSTSVINE…PIRLLWRSKK (86 aa).

The protein belongs to the TRAFAC class TrmE-Era-EngA-EngB-Septin-like GTPase superfamily. EngA (Der) GTPase family. Associates with the 50S ribosomal subunit.

In terms of biological role, GTPase that plays an essential role in the late steps of ribosome biogenesis. This Trichormus variabilis (strain ATCC 29413 / PCC 7937) (Anabaena variabilis) protein is GTPase Der.